A 292-amino-acid chain; its full sequence is CCR4-NOT transcription complex subunit 8 (292 aa).

A divalent metal cation is bound by residues Asp40, Glu42, Asp161, and Asp230.

Belongs to the CAF1 family. In terms of assembly, component of the CCR4-NOT complex; distinct complexes seem to exist that differ in the participation of probably mutually exclusive catalytic subunits; the complex contains two deadenylase subunits, CNOT6 or CNOT6L, and CNOT7 or CNOT8. In the complex interacts directly with CNOT1. Interacts with BTG1, BTG2 and TOB1. Interacts with BTG4.

It is found in the cytoplasm. It localises to the nucleus. The catalysed reaction is Exonucleolytic cleavage of poly(A) to 5'-AMP.. Its function is as follows. Has 3'-5' poly(A) exoribonuclease activity for synthetic poly(A) RNA substrate. Its function seems to be partially redundant with that of CNOT7. Catalytic component of the CCR4-NOT complex which is linked to various cellular processes including bulk mRNA degradation, miRNA-mediated repression, translational repression during translational initiation and general transcription regulation. During miRNA-mediated repression the complex also seems to act as translational repressor during translational initiation. Additional complex functions may be a consequence of its influence on mRNA expression. Associates with members of the BTG family such as TOB1 and BTG2 and is required for their anti-proliferative activity. This Homo sapiens (Human) protein is CCR4-NOT transcription complex subunit 8 (CNOT8).